The primary structure comprises 427 residues: G2/mitotic-specific cyclin-B1 (427 aa).

The tract at residues 33–126 is disordered; that stretch reads ATSKPGLRPR…DTPSPSPMET (94 aa). Lys-73 carries the N6-acetyllysine modification. Residues 100–110 are compositionally biased toward basic and acidic residues; sequence EPEHVKEDKLS. Phosphoserine; by CDK1 is present on Ser-120. Phosphoserine is present on Ser-122. Phosphoserine; by PLK1 is present on Ser-127. Ser-141 is subject to Phosphoserine. Interaction with CDK2 stretches follow at residues 163 to 171 and 252 to 255; these read EYVKDIYAY and YEEM. Thr-315 carries the post-translational modification Phosphothreonine.

The protein belongs to the cyclin family. Cyclin AB subfamily. In terms of assembly, interacts with the CDC2 protein kinase to form a serine/threonine kinase holoenzyme complex also known as maturation promoting factor (MPF). The cyclin subunit imparts substrate specificity to the complex. Binds HEI10. Interacts with catalytically active RALBP1 and CDC2 during mitosis to form an endocytotic complex during interphase. Interacts with CCNF; interaction is required for nuclear localization. Interacts with CDK5RAP3. Interacts with RFPL4A and UBE2A. Interacts with INCA1. In terms of processing, ubiquitinated by the SCF(NIPA) complex during interphase, leading to its destruction. Deubiquitinated by USP22 during G2/M phase. Phosphorylated by PLK1 at Ser-127 on centrosomes during prophase: phosphorylation by PLK1 does not cause nuclear import. Phosphorylation at Ser-141 was also reported to be mediated by PLK1 but Ser-127 seems to be the primary phosphorylation site.

Its subcellular location is the cytoplasm. The protein resides in the nucleus. It localises to the cytoskeleton. It is found in the microtubule organizing center. The protein localises to the centrosome. Functionally, essential for the control of the cell cycle at the G2/M (mitosis) transition. This chain is G2/mitotic-specific cyclin-B1 (CCNB1), found in Bos taurus (Bovine).